The primary structure comprises 566 residues: Putative UDP-glucuronate:xylan alpha-glucuronosyltransferase 5 (566 aa).

Residues 17–37 (LILISLSFLGLLLNFKPLFLL) traverse the membrane as a helical; Signal-anchor for type II membrane protein segment. Residues Asp372 and Asp374 each coordinate Mn(2+). Residues 372–374 (DAD), 401–403 (NSG), 428–432 (NGGDQ), and 475–480 (HYLGLK) each bind substrate. A Mn(2+)-binding site is contributed by His475.

It belongs to the glycosyltransferase 8 family. Glycogenin subfamily. The cofactor is Mn(2+).

Its subcellular location is the golgi apparatus membrane. Its function is as follows. May be involved in the substitutions of the xylan backbone in stem glucuronoxylan. This is Putative UDP-glucuronate:xylan alpha-glucuronosyltransferase 5 (GUX5) from Arabidopsis thaliana (Mouse-ear cress).